The chain runs to 134 residues: RuBisCO chaperone RbcX (134 aa).

Positions 97-134 (SNGNHRRSLLERLTQVDSSSTDQTEPNPGESDTSEDSE) are disordered. Positions 111–122 (QVDSSSTDQTEP) are enriched in polar residues.

Belongs to the RbcX family. In terms of assembly, homodimer (RbcX2). Interacts with the exposed C-terminal peptide of RbcL ('Glu-459-Asp-468'); binds 2 RbcL peptides per RbcX2, stapling them into an RbcL2 dimer. A slightly longer peptide binds with a higher affinity, but no long-term stable interaction with RbcL is detected. Contacts a second RbcL monomer via its peripheral polar surface.

Its subcellular location is the carboxysome. The protein localises to the cytoplasm. An RbcL-specific chaperone. Required for assembly of the RbcL8 core, acting downstream of the major chaperonin (GroEL-GroES). Acts on newly folded RbcL, has a transient dynamic interaction with RbcL and is eventually displaced by RbcS. The central cleft of the RbcX homodimer (RbcX2) binds the C-terminus of an RbcL monomer, stabilizing the C-terminus and probably preventing its reassociation with chaperonin GroEL-ES. At the same time the peripheral region of RbcX2 binds a second RbcL monomer, bridging the RbcL homodimers in the correct orientation. The RbcX2(2)-bound RbcL dimers then assemble into the RbcL8 core (RbcL8-(RbcX2)8). RbcS binding triggers the release of RbcX2. Required for optimal reconstitution of RuBisCO into its RbcL8S8 holoenzyme form upon expression of rbcL-rbcS subunits in E.coli, and probably also in situ. A frameshift mutation that replaces half the protein reduces accumulation of both RbcL and RbcS subunits and halves activity of RuBisCO in situ and in E.coli. This Picosynechococcus sp. (strain ATCC 27264 / PCC 7002 / PR-6) (Agmenellum quadruplicatum) protein is RuBisCO chaperone RbcX.